The primary structure comprises 246 residues: Auxin-responsive protein IAA25 (246 aa).

Residues 1 to 22 (MKSSSVAPRLKQERQDDCKFQE) form a disordered region. Residues 10-22 (LKQERQDDCKFQE) are compositionally biased toward basic and acidic residues. The EAR-like (transcriptional repression) motif lies at 28 to 32 (LELRL). The 96-residue stretch at 143-238 (TMFVKVNLEG…SVKRLYIAQD (96 aa)) folds into the PB1 domain.

It belongs to the Aux/IAA family. As to quaternary structure, homodimers and heterodimers. Highly expressed in flowers. Expressed in roots and seedlings.

The protein resides in the nucleus. In terms of biological role, aux/IAA proteins are short-lived transcriptional factors that function as repressors of early auxin response genes at low auxin concentrations. This Oryza sativa subsp. japonica (Rice) protein is Auxin-responsive protein IAA25 (IAA25).